The primary structure comprises 251 residues: tRNA1(Val) (adenine(37)-N6)-methyltransferase (251 aa).

Belongs to the methyltransferase superfamily. tRNA (adenine-N(6)-)-methyltransferase family.

Its subcellular location is the cytoplasm. It catalyses the reaction adenosine(37) in tRNA1(Val) + S-adenosyl-L-methionine = N(6)-methyladenosine(37) in tRNA1(Val) + S-adenosyl-L-homocysteine + H(+). In terms of biological role, specifically methylates the adenine in position 37 of tRNA(1)(Val) (anticodon cmo5UAC). This Shewanella frigidimarina (strain NCIMB 400) protein is tRNA1(Val) (adenine(37)-N6)-methyltransferase.